The following is a 566-amino-acid chain: uncharacterized protein (566 aa).

Belongs to the protein kinase superfamily. ADCK protein kinase family.

This is an uncharacterized protein from Synechocystis sp. (strain ATCC 27184 / PCC 6803 / Kazusa).